A 455-amino-acid polypeptide reads, in one-letter code: Bifunctional protein GlmU (455 aa).

A pyrophosphorylase region spans residues 1-228 (MTQPLHVIIL…AQEAEGANDP (228 aa)). UDP-N-acetyl-alpha-D-glucosamine is bound by residues 10 to 13 (LAAG), Lys24, Gln76, 81 to 82 (GT), 103 to 105 (YGD), Gly138, Glu153, Asn168, and Asn226. Asp105 contributes to the Mg(2+) binding site. Asn226 serves as a coordination point for Mg(2+). Residues 229–249 (WQLSQLERAWQRRAVRALCAQ) form a linker region. The N-acetyltransferase stretch occupies residues 250-455 (GARVRDPARL…DGWKRPLKKS (206 aa)). Positions 332 and 350 each coordinate UDP-N-acetyl-alpha-D-glucosamine. Residue His362 is the Proton acceptor of the active site. Tyr365 and Asn376 together coordinate UDP-N-acetyl-alpha-D-glucosamine. Acetyl-CoA contacts are provided by residues Ala379, 385 to 386 (NY), Ser404, Ala422, and Arg439.

This sequence in the N-terminal section; belongs to the N-acetylglucosamine-1-phosphate uridyltransferase family. In the C-terminal section; belongs to the transferase hexapeptide repeat family. Homotrimer. Mg(2+) serves as cofactor.

The protein resides in the cytoplasm. The enzyme catalyses alpha-D-glucosamine 1-phosphate + acetyl-CoA = N-acetyl-alpha-D-glucosamine 1-phosphate + CoA + H(+). It carries out the reaction N-acetyl-alpha-D-glucosamine 1-phosphate + UTP + H(+) = UDP-N-acetyl-alpha-D-glucosamine + diphosphate. Its pathway is nucleotide-sugar biosynthesis; UDP-N-acetyl-alpha-D-glucosamine biosynthesis; N-acetyl-alpha-D-glucosamine 1-phosphate from alpha-D-glucosamine 6-phosphate (route II): step 2/2. The protein operates within nucleotide-sugar biosynthesis; UDP-N-acetyl-alpha-D-glucosamine biosynthesis; UDP-N-acetyl-alpha-D-glucosamine from N-acetyl-alpha-D-glucosamine 1-phosphate: step 1/1. It participates in bacterial outer membrane biogenesis; LPS lipid A biosynthesis. Its function is as follows. Catalyzes the last two sequential reactions in the de novo biosynthetic pathway for UDP-N-acetylglucosamine (UDP-GlcNAc). The C-terminal domain catalyzes the transfer of acetyl group from acetyl coenzyme A to glucosamine-1-phosphate (GlcN-1-P) to produce N-acetylglucosamine-1-phosphate (GlcNAc-1-P), which is converted into UDP-GlcNAc by the transfer of uridine 5-monophosphate (from uridine 5-triphosphate), a reaction catalyzed by the N-terminal domain. The sequence is that of Bifunctional protein GlmU from Stenotrophomonas maltophilia (strain K279a).